Here is a 453-residue protein sequence, read N- to C-terminus: Armadillo repeat-containing X-linked protein 1 (453 aa).

Topologically, residues 1-6 are mitochondrial intermembrane; sequence MGRTRE. 2 mitochondrion outer membrane (MOM)-targeting sequence regions span residues 1–6 and 26–36; these read MGRTRE and RLAWGRDENEK. A helical; Signal-anchor membrane pass occupies residues 7–29; sequence AGCVAAGVVIGAGACYCVYRLAW. The Cytoplasmic portion of the chain corresponds to 30–453; that stretch reads GRDENEKIWD…VKVLKVLTKL (424 aa). The interval 140 to 182 is disordered; sequence PSLPCPGGRGGGCHPTRSGSRAGGRASGKSKGKARSKSTRAPA. The segment covering 167–177 has biased composition (basic residues); it reads GKSKGKARSKS. ARM repeat units follow at residues 195–235, 237–276, 358–398, and 415–453; these read PYKI…NNAA, SFNQ…NLSV, PAMT…NIND, and SSLF…LTKL.

Belongs to the eutherian X-chromosome-specific Armcx family. In terms of assembly, interacts with MIRO1.

The protein resides in the mitochondrion. It localises to the mitochondrion outer membrane. In terms of biological role, regulates mitochondrial transport during axon regeneration. Increases the proportion of motile mitochondria by recruiting stationary mitochondria into the motile pool. Enhances mitochondria movement and neurite growth in both adult axons and embryonic neurons. Promotes neuronal survival and axon regeneration after nerve injury. May link mitochondria to the Trak1-kinesin motor complex via its interaction with MIRO1. The protein is Armadillo repeat-containing X-linked protein 1 (ARMCX1) of Pongo abelii (Sumatran orangutan).